The sequence spans 353 residues: A-kinase anchor protein 7 isoforms delta and gamma (353 aa).

Basic and acidic residues-rich tracts occupy residues 1–22 (MERP…RGEE) and 66–76 (RSKENRGDRND). Disordered stretches follow at residues 1 to 33 (MERP…SPVG) and 47 to 85 (DDCG…KKAK). AMP is bound by residues threonine 134 and 224–226 (HLT). Residues threonine 134 and 224-226 (HLT) contribute to the CMP site. A PKA-RII-alpha subunit binding domain region spans residues 299-353 (AELVRLSKRLVENAVLKAVQQYLEETQNKKQPGEGNSVKAEEGDRNGDGSDNNRK). The tract at residues 300 to 324 (ELVRLSKRLVENAVLKAVQQYLEET) is RI-alpha-binding. An RII-binding region spans residues 301-314 (LVRLSKRLVENAVL). Residues 321-353 (LEETQNKKQPGEGNSVKAEEGDRNGDGSDNNRK) form a disordered region. Positions 337–353 (KAEEGDRNGDGSDNNRK) are enriched in basic and acidic residues.

As to quaternary structure, binds cAMP-dependent protein kinase (PKA). Interacts with PRKCA; only the cytoplasmic form is capable of interacting with PRKCA. Expressed highly in the heart, and moderately in brain, lung, liver, kidney and testis. Hardly detectable in spleen and skeletal muscle. In kidney, isoform Delta is expressed in the principal cells of the IMCD.

It localises to the nucleus. Its subcellular location is the cytoplasm. The protein resides in the cell membrane. Functionally, probably targets cAMP-dependent protein kinase (PKA) to the cellular membrane or cytoskeletal structures. The membrane-associated form reduces epithelial sodium channel (ENaC) activity, whereas the free cytoplasmic form may negatively regulate ENaC channel feedback inhibition by intracellular sodium. Isoform Delta may be involved in shuttling aquaporin-2 (AQP2) to the plasma membrane. In Rattus norvegicus (Rat), this protein is A-kinase anchor protein 7 isoforms delta and gamma.